The sequence spans 240 residues: Ubiquinone biosynthesis O-methyltransferase (240 aa).

Positions 44, 64, 85, and 129 each coordinate S-adenosyl-L-methionine.

Belongs to the methyltransferase superfamily. UbiG/COQ3 family.

The catalysed reaction is a 3-demethylubiquinol + S-adenosyl-L-methionine = a ubiquinol + S-adenosyl-L-homocysteine + H(+). It carries out the reaction a 3-(all-trans-polyprenyl)benzene-1,2-diol + S-adenosyl-L-methionine = a 2-methoxy-6-(all-trans-polyprenyl)phenol + S-adenosyl-L-homocysteine + H(+). It participates in cofactor biosynthesis; ubiquinone biosynthesis. O-methyltransferase that catalyzes the 2 O-methylation steps in the ubiquinone biosynthetic pathway. The protein is Ubiquinone biosynthesis O-methyltransferase of Escherichia coli (strain K12 / MC4100 / BW2952).